The chain runs to 204 residues: MDDNGLDTLGQTIVGALPGIATGHSVGFGQLTLTVDAGKIVEVMRLLRDDPRFRFISFIDMTAVDYPGRAERFEIVYHLLSPKLNERVRVKAEVGETTLVPSIIEVFPGADWFEREAYDLYGIVITGHPDMRRLLTDYGFDGHPLRKDFPLTGFVEVRYDDDQKRVIYEPVRLNQEFRKFDFLSPWEGADYPVLPGDEKAGVKS.

This sequence belongs to the complex I 30 kDa subunit family. As to quaternary structure, NDH-1 is composed of 14 different subunits. Subunits NuoB, C, D, E, F, and G constitute the peripheral sector of the complex.

Its subcellular location is the cell inner membrane. The catalysed reaction is a quinone + NADH + 5 H(+)(in) = a quinol + NAD(+) + 4 H(+)(out). Functionally, NDH-1 shuttles electrons from NADH, via FMN and iron-sulfur (Fe-S) centers, to quinones in the respiratory chain. The immediate electron acceptor for the enzyme in this species is believed to be ubiquinone. Couples the redox reaction to proton translocation (for every two electrons transferred, four hydrogen ions are translocated across the cytoplasmic membrane), and thus conserves the redox energy in a proton gradient. The protein is NADH-quinone oxidoreductase subunit C of Rhodopseudomonas palustris (strain ATCC BAA-98 / CGA009).